Here is a 601-residue protein sequence, read N- to C-terminus: ATP-dependent lipid A-core flippase (601 aa).

4 helical membrane-spanning segments follow: residues 27-47 (IGLFLISIVGFLIFASTQPML), 83-103 (LLIVLIAAWQGLGSYLGNYFL), 174-194 (LLWMNWRLTLVMIAILPLIAV), and 267-287 (PLLQLVIYSAMAVLMFLVLYL). The ABC transmembrane type-1 domain occupies 31-322 (LISIVGFLIF…LSEVSSTIQK (292 aa)). In terms of domain architecture, ABC transporter spans 354–590 (LEVRNLSFTY…NGYYSRLHAM (237 aa)). 388 to 395 (GRSGSGKS) contacts ATP.

Belongs to the ABC transporter superfamily. Lipid exporter (TC 3.A.1.106) family. Homodimer.

The protein localises to the cell inner membrane. It catalyses the reaction ATP + H2O + lipid A-core oligosaccharideSide 1 = ADP + phosphate + lipid A-core oligosaccharideSide 2.. In terms of biological role, involved in lipopolysaccharide (LPS) biosynthesis. Translocates lipid A-core from the inner to the outer leaflet of the inner membrane. Transmembrane domains (TMD) form a pore in the inner membrane and the ATP-binding domain (NBD) is responsible for energy generation. This chain is ATP-dependent lipid A-core flippase, found in Pseudomonas fluorescens (strain ATCC BAA-477 / NRRL B-23932 / Pf-5).